The sequence spans 232 residues: E3 ubiquitin-protein ligase RNF125 (232 aa).

The span at 1 to 10 (MGSVLSSDSG) shows a compositional bias: polar residues. The interval 1–27 (MGSVLSSDSGKSAPPSATPRALERRGD) is disordered. Glycine 2 is lipidated: N-myristoyl glycine. The Zn(2+) site is built by cysteine 37 and cysteine 40. The RING-type zinc-finger motif lies at 37 to 76 (CAVCLEVLHQPVRTRCGHVFCRSCIATSLKNNKWTCPYCR). The segment at 43–45 (VLH) is interaction with the C2HC RNF-type zinc finger. Residues cysteine 52, histidine 54, cysteine 57, cysteine 60, cysteine 72, cysteine 75, cysteine 100, and cysteine 103 each contribute to the Zn(2+) site. A C2HC RNF-type zinc finger spans residues 100 to 119 (CAECDTLVCLGEMRAHIRTC). An interaction with the RING-type zinc finger region spans residues 109 to 113 (LGEMR). Positions 115 and 119 each coordinate Zn(2+). Positions 120-128 (QKYIDKYGP) are linker region. The required for interaction with ubiquitin and for autoubiquitination stretch occupies residues 210–224 (EEALIRRVLDRSLLE).

As to quaternary structure, interacts with UBE2D1. Interacts with VCP/p97; leading to recruit RNF125 to RIGI and promote ubiquitination of RIGI. Post-translationally, autoubiquitinated, leading to its subsequent proteasomal degradation.

The protein resides in the golgi apparatus membrane. It catalyses the reaction S-ubiquitinyl-[E2 ubiquitin-conjugating enzyme]-L-cysteine + [acceptor protein]-L-lysine = [E2 ubiquitin-conjugating enzyme]-L-cysteine + N(6)-ubiquitinyl-[acceptor protein]-L-lysine.. It functions in the pathway protein modification; protein ubiquitination. E3 ubiquitin-protein ligase that mediates ubiquitination and subsequent proteasomal degradation of target proteins, such as RIGI, MAVS/IPS1, IFIH1/MDA5, JAK1 and p53/TP53. Acts as a negative regulator of type I interferon production by mediating ubiquitination of RIGI at 'Lys-181', leading to RIGI degradation. Mediates ubiquitination and subsequent degradation of p53/TP53. Mediates ubiquitination and subsequent degradation of JAK1. Acts as a positive regulator of T-cell activation. The protein is E3 ubiquitin-protein ligase RNF125 (RNF125) of Macaca fascicularis (Crab-eating macaque).